Consider the following 512-residue polypeptide: Spermatocyte protein spe-8 (512 aa).

The interval 1–85 is disordered; the sequence is MRSKSSEGDL…PKPSSDNNNS (85 aa). Basic and acidic residues predominate over residues 15–41; sequence TQSREDKETTATYSEDTKPETQKERNA. A compositionally biased stretch (pro residues) spans 68-78; that stretch reads EAPPPPPPPKP. The 92-residue stretch at 114 to 205 folds into the SH2 domain; that stretch reads FYHGFMGRNE…YEGMTLICGL (92 aa). In terms of domain architecture, Protein kinase spans 217–485; sequence VTLNKKLGEG…KEEVGFHEIE (269 aa). ATP contacts are provided by residues 223 to 231 and lysine 250; that span reads LGEGQFGEV. Aspartate 344 functions as the Proton acceptor in the catalytic mechanism.

This sequence belongs to the protein kinase superfamily. Tyr protein kinase family. Fes/fps subfamily. Expression is restricted to male germline.

The protein resides in the cell membrane. The protein localises to the cytoplasm. It carries out the reaction L-tyrosyl-[protein] + ATP = O-phospho-L-tyrosyl-[protein] + ADP + H(+). Functionally, probable non-receptor tyrosine-protein kinase which plays a role in spermatid activation (spermiogenesis) in hermaphrodites. This chain is Spermatocyte protein spe-8, found in Caenorhabditis elegans.